The chain runs to 135 residues: Cystatin-1 (135 aa).

The signal sequence occupies residues 1-24 (MRKHRIVSLVAALLVLLALAAVSS). The short motif at 86-90 (QVVAG) is the Secondary area of contact element.

It belongs to the cystatin family. Phytocystatin subfamily.

The protein is Cystatin-1 (RAMDAZC7) of Zea mays (Maize).